An 85-amino-acid polypeptide reads, in one-letter code: Large ribosomal subunit protein bL27 (85 aa).

It belongs to the bacterial ribosomal protein bL27 family.

The sequence is that of Large ribosomal subunit protein bL27 from Campylobacter hominis (strain ATCC BAA-381 / DSM 21671 / CCUG 45161 / LMG 19568 / NCTC 13146 / CH001A).